Here is a 380-residue protein sequence, read N- to C-terminus: Chaperone protein DnaJ (380 aa).

In terms of domain architecture, J spans 5 to 70 (DYYEVLGVER…SKRAAYDQYG (66 aa)). A CR-type zinc finger spans residues 139 to 217 (GTNVNIRVPT…CHGEGRVEES (79 aa)). Cys152, Cys155, Cys169, Cys172, Cys191, Cys194, Cys205, and Cys208 together coordinate Zn(2+). 4 CXXCXGXG motif repeats span residues 152-159 (CKPCDGSG), 169-176 (CPTCGGIG), 191-198 (CPRCHGHG), and 205-212 (CDSCHGEG). The segment at 224 to 245 (VPPGVDTGDRIRLSGEGEAGTQ) is disordered.

It belongs to the DnaJ family. Homodimer. It depends on Zn(2+) as a cofactor.

The protein resides in the cytoplasm. In terms of biological role, participates actively in the response to hyperosmotic and heat shock by preventing the aggregation of stress-denatured proteins and by disaggregating proteins, also in an autonomous, DnaK-independent fashion. Unfolded proteins bind initially to DnaJ; upon interaction with the DnaJ-bound protein, DnaK hydrolyzes its bound ATP, resulting in the formation of a stable complex. GrpE releases ADP from DnaK; ATP binding to DnaK triggers the release of the substrate protein, thus completing the reaction cycle. Several rounds of ATP-dependent interactions between DnaJ, DnaK and GrpE are required for fully efficient folding. Also involved, together with DnaK and GrpE, in the DNA replication of plasmids through activation of initiation proteins. This Pseudomonas syringae pv. syringae (strain B728a) protein is Chaperone protein DnaJ.